The following is a 350-amino-acid chain: Glutamyl-tRNA reductase (350 aa).

Residues 53 to 56, Ser-105, 110 to 112, and Gln-116 each bind substrate; these read TCNR and ETQ. Catalysis depends on Cys-54, which acts as the Nucleophile. 185–190 lines the NADP(+) pocket; sequence GAGETA.

Belongs to the glutamyl-tRNA reductase family. As to quaternary structure, homodimer.

The enzyme catalyses (S)-4-amino-5-oxopentanoate + tRNA(Glu) + NADP(+) = L-glutamyl-tRNA(Glu) + NADPH + H(+). Its pathway is porphyrin-containing compound metabolism; protoporphyrin-IX biosynthesis; 5-aminolevulinate from L-glutamyl-tRNA(Glu): step 1/2. Catalyzes the NADPH-dependent reduction of glutamyl-tRNA(Glu) to glutamate 1-semialdehyde (GSA). This Deinococcus radiodurans (strain ATCC 13939 / DSM 20539 / JCM 16871 / CCUG 27074 / LMG 4051 / NBRC 15346 / NCIMB 9279 / VKM B-1422 / R1) protein is Glutamyl-tRNA reductase.